Here is a 220-residue protein sequence, read N- to C-terminus: GTP cyclohydrolase 1 (220 aa).

Residues cysteine 109, histidine 112, and cysteine 180 each coordinate Zn(2+).

This sequence belongs to the GTP cyclohydrolase I family. Toroid-shaped homodecamer, composed of two pentamers of five dimers.

It carries out the reaction GTP + H2O = 7,8-dihydroneopterin 3'-triphosphate + formate + H(+). Its pathway is cofactor biosynthesis; 7,8-dihydroneopterin triphosphate biosynthesis; 7,8-dihydroneopterin triphosphate from GTP: step 1/1. In Yersinia pseudotuberculosis serotype O:1b (strain IP 31758), this protein is GTP cyclohydrolase 1.